We begin with the raw amino-acid sequence, 397 residues long: MLSKFFPHIKEKPLSERVKSRDAFIYLDRVMWSFGWTEPENKRWILPYKLWLAFVNIVMLILLPISISIEYLHRFKTFSAGEFLSSLEIGVNMYGSSFKCAFTLIGFKKRQEAKVLLDQLDKRCLSDKERSTVHRYVAMGNFFDILYHIFYSTFVVMNFPYFLLERRHAWRMYFPYIDSDEQFYISSIAECFLMTEAIYMDLCTDVCPLISMLMARCHISLLKQRLRNLRSKPGRTEDEYLEELTECIRDHRLLLDYVDALRPVFSGTIFVQFLLIGTVLGLSMINLMFFSTFWTGVATCLFMFDVSMETFPFCYLCNMIIDDCQEMSNCLFQSDWTSADRRYKSTLVYFLHNLQQPITLTAGGVFPISMQTNLAMVKLAFSVVTVIKQFNLAERFQ.

The Cytoplasmic portion of the chain corresponds to 1-49 (MLSKFFPHIKEKPLSERVKSRDAFIYLDRVMWSFGWTEPENKRWILPYK). A helical membrane pass occupies residues 50–70 (LWLAFVNIVMLILLPISISIE). Over 71-86 (YLHRFKTFSAGEFLSS) the chain is Extracellular. Residues 87 to 107 (LEIGVNMYGSSFKCAFTLIGF) traverse the membrane as a helical segment. At 108-136 (KKRQEAKVLLDQLDKRCLSDKERSTVHRY) the chain is on the cytoplasmic side. A helical transmembrane segment spans residues 137–157 (VAMGNFFDILYHIFYSTFVVM). At 158 to 182 (NFPYFLLERRHAWRMYFPYIDSDEQ) the chain is on the extracellular side. The chain crosses the membrane as a helical span at residues 183-203 (FYISSIAECFLMTEAIYMDLC). The Cytoplasmic portion of the chain corresponds to 204 to 263 (TDVCPLISMLMARCHISLLKQRLRNLRSKPGRTEDEYLEELTECIRDHRLLLDYVDALRP). A helical membrane pass occupies residues 264–280 (VFSGTIFVQFLLIGTVL). The Extracellular portion of the chain corresponds to 281–286 (GLSMIN). A helical transmembrane segment spans residues 287–304 (LMFFSTFWTGVATCLFMF). Topologically, residues 305–356 (DVSMETFPFCYLCNMIIDDCQEMSNCLFQSDWTSADRRYKSTLVYFLHNLQQ) are cytoplasmic. The helical transmembrane segment at 357-377 (PITLTAGGVFPISMQTNLAMV) threads the bilayer. The Extracellular segment spans residues 378-397 (KLAFSVVTVIKQFNLAERFQ).

The protein belongs to the insect chemoreceptor superfamily. Heteromeric odorant receptor channel (TC 1.A.69) family. Or2a subfamily. As to quaternary structure, interacts with Orco, via conserved C-terminal cytoplasmic loops. Complexes exist early in the endomembrane system in olfactory sensory neurons (OSNs), coupling these complexes to the conserved ciliary trafficking pathway. Interacts with snmp1. Expressed with Orco in 17-20 sensory neurons on the medial-proximal edge of the antenna. Expressed in the ab3A neuron which responds to ethyl butyrate.

It is found in the cell membrane. Functionally, odorant receptor which mediates acceptance or avoidance behavior, depending on its substrates. The odorant receptor repertoire encodes a large collection of odor stimuli that vary widely in identity, intensity, and duration. Involved in the behavioral responses ethyl butyrate and to esters in more general. Complexes with Orco to form odorant-sensing units, providing sensitive and prolonged odorant signaling and calcium permeability. They are necessary and sufficient to promote functional reconstitution of odor-evoked signaling in sensory neurons that normally respond only to carbon dioxide. In Drosophila melanogaster (Fruit fly), this protein is Odorant receptor 22a (Or22a).